The following is a 522-amino-acid chain: Target of rapamycin complex 2 subunit MAPKAP1 (522 aa).

Ala-2 bears the N-acetylalanine mark. An interaction with MAP3K2 region spans residues 2 to 184 (AFLDNPTIIL…KKIDVYLPLH (183 aa)). Residues 2–267 (AFLDNPTIIL…GFSTLALVEK (266 aa)) form an interaction with NBN region. The segment at 38–59 (LEKTHPPSVPGDSGSEVQGSSG) is disordered. Position 86 is a phosphothreonine; by PKB/AKT1 and RPS6KB1 (Thr-86). Ser-128 bears the Phosphoserine; by PKC mark. Positions 139–267 (QSILSVRLEQ…GFSTLALVEK (129 aa)) constitute a CRIM domain. Ser-186, Ser-315, and Ser-356 each carry phosphoserine. An SIN1-type RBD region spans residues 279–353 (LFVRINAAHG…QNAWEFCLVR (75 aa)). The SIN1-type PH domain maps to 382 to 487 (HYKSFKVSMI…IVLKVNYILE (106 aa)). Arg-393 lines the a 1,2-diacyl-sn-glycero-3-phospho-(1D-myo-inositol-3,4,5-trisphosphate) pocket. Phosphothreonine; by RPS6KB1 is present on Thr-398. A 1,2-diacyl-sn-glycero-3-phospho-(1D-myo-inositol-3,4,5-trisphosphate) contacts are provided by Lys-428 and Lys-464. Residues 468–522 (FESDAATVSEIVLKVNYILESRASTARADYLAQKQRKLNRRTSFSFQKEKKSGQQ) form an interaction with ATF2 region. Ser-510 bears the Phosphoserine mark.

Belongs to the SIN1 family. As to quaternary structure, component of the mechanistic target of rapamycin complex 2 (mTORC2), consisting in two heterotretramers composed of MTOR, MLST8, RICTOR and MAPKAP1/SIN1. The mTORC2 core complex associates with PRR5/PROTOR1 and/or PRR5L/PROTOR2. Contrary to mTORC1, mTORC2 does not bind to and is not sensitive to FKBP12-rapamycin. Interacts with MAP3K2. Interacts with ATF2. Interacts with MAPK8. Interacts with GTP-bound HRAS and KRAS; inhibiting their activity. Interacts with IFNAR2. Phosphorylation at Ser-128 by PKC promotes relocalization to the perinuclear region, where the mTORC2 complex specifically mediates phosphorylation of SGK1. Phosphorylated at Thr-86 by AKT1 or RPS6KB1 in the presence of growth factors; the effect of this phosphorylation is however unclear. According to two studies, phosphorylation at Thr-86 by AKT1 is part of a positive feedback loop that increases mTORC2 activation. According to another study, phosphorylation at Thr-86 and Thr-398 by RPS6KB1 promotes dissociation from the mTORC2 complex, leading to inhibit mTORC2 signaling. As to expression, uniquitously expressed, with highest levels in testis, kidney and liver. Present in renal tubule cells (at protein level).

The protein resides in the cell membrane. It is found in the endoplasmic reticulum membrane. It localises to the early endosome membrane. The protein localises to the late endosome membrane. Its subcellular location is the lysosome membrane. The protein resides in the golgi apparatus membrane. It is found in the mitochondrion outer membrane. It localises to the cytoplasm. The protein localises to the perinuclear region. Its subcellular location is the nucleus. Its activity is regulated as follows. Phosphatidylinositol 3,4,5-trisphosphate (PI(3,4,5)P3) promotes MTOR activation by relieving MAPKAP1/SIN1-mediated inhibition of MTOR that takes place in absence of PI(3,4,5)P3. Functionally, component of the mechanistic target of rapamycin complex 2 (mTORC2), which transduces signals from growth factors to pathways involved in proliferation, cytoskeletal organization, lipogenesis and anabolic output. In response to growth factors, mTORC2 phosphorylates and activates AGC protein kinase family members, including AKT (AKT1, AKT2 and AKT3), PKC (PRKCA, PRKCB and PRKCE) and SGK1. In contrast to mTORC1, mTORC2 is nutrient-insensitive. Within the mTORC2 complex, MAPKAP1/SIN1 acts as a substrate adapter which recognizes and binds AGC protein kinase family members for phosphorylation by MTOR. mTORC2 plays a critical role in AKT1 activation by mediating phosphorylation of different sites depending on the context, such as 'Thr-450', 'Ser-473', 'Ser-477' or 'Thr-479', facilitating the phosphorylation of the activation loop of AKT1 on 'Thr-308' by PDPK1/PDK1 which is a prerequisite for full activation. mTORC2 catalyzes the phosphorylation of SGK1 at 'Ser-422' and of PRKCA on 'Ser-657'. The mTORC2 complex also phosphorylates various proteins involved in insulin signaling, such as FBXW8 and IGF2BP1. mTORC2 acts upstream of Rho GTPases to regulate the actin cytoskeleton, probably by activating one or more Rho-type guanine nucleotide exchange factors. mTORC2 promotes the serum-induced formation of stress-fibers or F-actin. MAPKAP1 inhibits MAP3K2 by preventing its dimerization and autophosphorylation. Inhibits HRAS and KRAS independently of mTORC2 complex. Enhances osmotic stress-induced phosphorylation of ATF2 and ATF2-mediated transcription. Involved in ciliogenesis, regulates cilia length through its interaction with CCDC28B independently of mTORC2 complex. The sequence is that of Target of rapamycin complex 2 subunit MAPKAP1 from Mus musculus (Mouse).